The following is a 1131-amino-acid chain: Chitin synthase 1 (1131 aa).

Residues M1–P20 show a composition bias toward basic and acidic residues. Positions M1–Y22 are disordered. Phosphoserine occurs at positions 34, 35, 270, 299, and 318. Positions Y282 to S305 are disordered. T328 is subject to Phosphothreonine. S358 bears the Phosphoserine mark. 7 helical membrane-spanning segments follow: residues F795–V815, V833–S853, V866–M886, I914–Q934, F942–C962, L1042–G1062, and I1101–I1121.

It belongs to the chitin synthase family.

The protein localises to the cell membrane. It carries out the reaction [(1-&gt;4)-N-acetyl-beta-D-glucosaminyl](n) + UDP-N-acetyl-alpha-D-glucosamine = [(1-&gt;4)-N-acetyl-beta-D-glucosaminyl](n+1) + UDP + H(+). With respect to regulation, requires proteolytic activation. In terms of biological role, polymerizes chitin, a structural polymer of the cell wall and septum, by transferring the sugar moiety of UDP-GlcNAc to the non-reducing end of the growing chitin polymer. Required for mitotic division septum formation during adverse conditions. The sequence is that of Chitin synthase 1 (CHS1) from Saccharomyces cerevisiae (strain ATCC 204508 / S288c) (Baker's yeast).